Reading from the N-terminus, the 655-residue chain is Protein movement modulator (655 aa).

Residues 1-54 (MEQPSILVKILHSIPHVNYTFRRVNDTFNPDSDVYLEPTNNKLQCQQKGIELQS) are Extracellular-facing. Residues N18 and N25 are each glycosylated (N-linked (GlcNAc...) asparagine). A helical membrane pass occupies residues 55–75 (LVILASIPAGLLIGSLLGLLL). The Cytoplasmic portion of the chain corresponds to 76 to 95 (YLLTRCCDRRQRKPSAQRCQ). Residues 96–116 (SCSLVIITLMTCAAIGLGLYG) traverse the membrane as a helical segment. The Extracellular segment spans residues 117–231 (NDDFHNGLLQ…GEFYESIRWP (115 aa)). N171, N188, and N211 each carry an N-linked (GlcNAc...) asparagine glycan. Residues 232–252 (ATLAFLTVLLLLCTVLVIGVA) traverse the membrane as a helical segment. Residues 253–258 (RRSRCT) lie on the Cytoplasmic side of the membrane. A helical transmembrane segment spans residues 259–279 (LIFFSVSGLFCIIICWLLAGV). The Extracellular segment spans residues 280 to 401 (YLASSVAAGD…ALRGLCGGGL (122 aa)). N326 and N372 each carry an N-linked (GlcNAc...) asparagine glycan. A helical transmembrane segment spans residues 402-422 (LGLSLMMVAGLLTSFLLTILV). The Cytoplasmic portion of the chain corresponds to 423–655 (YADSHAWIYL…CKTLESNDFY (233 aa)). Positions 446 to 576 (APLFPASNAP…NNHYNNTQHR (131 aa)) are disordered. The segment covering 450–464 (PASNAPSASISPTAP) has biased composition (low complexity). Residues 465–480 (LSTGTINRTLLHHQQA) are compositionally biased toward polar residues. A compositionally biased stretch (gly residues) spans 482-509 (SGGGSGTLPGSGGGAGAGGGVGANGHNG). 2 stretches are compositionally biased toward low complexity: residues 526–539 (SPSS…STAT) and 546–576 (SYHN…TQHR). 2 positions are modified to phosphoserine: S597 and S599.

The protein belongs to the tweety family.

Its subcellular location is the cell membrane. The catalysed reaction is chloride(in) = chloride(out). In terms of biological role, probable large-conductance Ca(2+)-activated chloride channel. Modulator of embryonic movement. This is Protein movement modulator from Drosophila melanogaster (Fruit fly).